A 178-amino-acid polypeptide reads, in one-letter code: Small ribosomal subunit protein uS5 (178 aa).

The 64-residue stretch at 13–76 folds into the S5 DRBM domain; that stretch reads LEERVVQINR…EAAKRNLIRV (64 aa). Residues 156–178 are disordered; sequence ASRRDMTPQELMERRTRRETEAA.

It belongs to the universal ribosomal protein uS5 family. In terms of assembly, part of the 30S ribosomal subunit. Contacts proteins S4 and S8.

Its function is as follows. With S4 and S12 plays an important role in translational accuracy. Functionally, located at the back of the 30S subunit body where it stabilizes the conformation of the head with respect to the body. The protein is Small ribosomal subunit protein uS5 of Chloroflexus aurantiacus (strain ATCC 29364 / DSM 637 / Y-400-fl).